The following is a 500-amino-acid chain: MELTVEPIDIGTERPVVLLNCADAETLGVHSLDRVEIDWDGTTEVGIVKVTDELVAAGRIGASHGFPEITDGTVVAVTPAGQPESVESIRRKLDGRELDSDELGAIVADIEADRLSDLELSAYVCASHANGLSLEETKQLTERMAEVGKQLSWEQPVVADKHSIGGVAGNRVTPVVVAIVAAAGLTIPKTSSRAVTSPAGTADTMEVFCPVEFSREEIRDIVTETGGCLVWGGAVDLSPVDDKVIRAQRPLSLDPPGQVIASVLSKKQSAGSSHIVVDIPYGAGAKVTSLSEARDLADDFRRVGDHLGLTIECALTRGSDPIGHGIGPVLEARDVLAVLEGEGPEPLRIKSLRLADIIFDMAREAGMPVDDRSAADILDSGAALSKFRDIVAVQGGDPDVSRDDLQPGDRTETVTADTDGLVVDVDNQAVSQLARRAGAPNDHGAGVVIHRRTGDKAVAGDVLYTIHAESSDRLEAAREYAAGDEIVRVGGRDEALVERR.

Residues Gly-166, 192–197 (SRAVTS), and Thr-201 contribute to the AMP site. Asp-254 acts as the Proton donor in catalysis. Ser-262 and Lys-286 together coordinate AMP.

This sequence belongs to the thymidine/pyrimidine-nucleoside phosphorylase family. Type 2 subfamily.

The enzyme catalyses AMP + phosphate = alpha-D-ribose 1,5-bisphosphate + adenine. It carries out the reaction CMP + phosphate = cytosine + alpha-D-ribose 1,5-bisphosphate. The catalysed reaction is UMP + phosphate = alpha-D-ribose 1,5-bisphosphate + uracil. Catalyzes the conversion of AMP and phosphate to adenine and ribose 1,5-bisphosphate (R15P). Exhibits phosphorylase activity toward CMP and UMP in addition to AMP. Functions in an archaeal AMP degradation pathway, together with R15P isomerase and RubisCO. In Natronomonas pharaonis (strain ATCC 35678 / DSM 2160 / CIP 103997 / JCM 8858 / NBRC 14720 / NCIMB 2260 / Gabara) (Halobacterium pharaonis), this protein is AMP phosphorylase (deoA).